Reading from the N-terminus, the 240-residue chain is Ribonuclease PH (240 aa).

Phosphate contacts are provided by residues arginine 87 and 125 to 127; that span reads GTR.

Belongs to the RNase PH family. Homohexameric ring arranged as a trimer of dimers.

The catalysed reaction is tRNA(n+1) + phosphate = tRNA(n) + a ribonucleoside 5'-diphosphate. Phosphorolytic 3'-5' exoribonuclease that plays an important role in tRNA 3'-end maturation. Removes nucleotide residues following the 3'-CCA terminus of tRNAs; can also add nucleotides to the ends of RNA molecules by using nucleoside diphosphates as substrates, but this may not be physiologically important. Probably plays a role in initiation of 16S rRNA degradation (leading to ribosome degradation) during starvation. The protein is Ribonuclease PH of Pseudomonas putida (strain ATCC 47054 / DSM 6125 / CFBP 8728 / NCIMB 11950 / KT2440).